The sequence spans 393 residues: Probable acetyl-CoA acyltransferase (393 aa).

C88 functions as the Acyl-thioester intermediate in the catalytic mechanism. Active-site proton acceptor residues include H349 and C378.

This sequence belongs to the thiolase-like superfamily. Thiolase family.

It localises to the cytoplasm. It carries out the reaction 2 acetyl-CoA = acetoacetyl-CoA + CoA. In Staphylococcus aureus (strain Mu50 / ATCC 700699), this protein is Probable acetyl-CoA acyltransferase.